The sequence spans 291 residues: m-AAA protease-interacting protein 1, mitochondrial (291 aa).

Residues 1 to 96 (MALAARLLPL…SLPASPIRSY (96 aa)) constitute a mitochondrion transit peptide.

As to quaternary structure, interacts with AFG3L2. Interacts with SPG7. Interacts with SMDT1/EMRE (via the N-terminal transit peptide); interaction is direct and takes place before maturation of SMDT1/EMRE.

Its subcellular location is the mitochondrion matrix. Promotes sorting of SMDT1/EMRE in mitochondria by ensuring its maturation. Interacts with the transit peptide region of SMDT1/EMRE precursor protein in the mitochondrial matrix, leading to protect it against protein degradation by YME1L1, thereby ensuring SMDT1/EMRE maturation by the mitochondrial processing peptidase (PMPCA and PMPCB). The protein is m-AAA protease-interacting protein 1, mitochondrial of Rattus norvegicus (Rat).